Here is a 104-residue protein sequence, read N- to C-terminus: MQKIRRDDEIIVIAGKDKGKRGKVLKVLANNRLVIGGLNLVKRHTKPNPMSGVQGGIVEKEAPLDASNVAIFNGETNKADRVGFKVEDGKKIRVFKSTQKAVDA.

It belongs to the universal ribosomal protein uL24 family. In terms of assembly, part of the 50S ribosomal subunit.

In terms of biological role, one of two assembly initiator proteins, it binds directly to the 5'-end of the 23S rRNA, where it nucleates assembly of the 50S subunit. Functionally, one of the proteins that surrounds the polypeptide exit tunnel on the outside of the subunit. The chain is Large ribosomal subunit protein uL24 from Pseudomonas fluorescens (strain SBW25).